Consider the following 490-residue polypeptide: Probable cytosol aminopeptidase (490 aa).

Mn(2+)-binding residues include Lys-257 and Asp-262. The active site involves Lys-269. Positions 281, 341, and 343 each coordinate Mn(2+). The active site involves Arg-345.

It belongs to the peptidase M17 family. Mn(2+) is required as a cofactor.

Its subcellular location is the cytoplasm. It carries out the reaction Release of an N-terminal amino acid, Xaa-|-Yaa-, in which Xaa is preferably Leu, but may be other amino acids including Pro although not Arg or Lys, and Yaa may be Pro. Amino acid amides and methyl esters are also readily hydrolyzed, but rates on arylamides are exceedingly low.. The catalysed reaction is Release of an N-terminal amino acid, preferentially leucine, but not glutamic or aspartic acids.. Functionally, presumably involved in the processing and regular turnover of intracellular proteins. Catalyzes the removal of unsubstituted N-terminal amino acids from various peptides. The sequence is that of Probable cytosol aminopeptidase from Prochlorococcus marinus (strain AS9601).